Here is a 173-residue protein sequence, read N- to C-terminus: Ribulose bisphosphate carboxylase small subunit, chloroplastic 5 (173 aa).

The N-terminal 49 residues, 1–49, are a transit peptide targeting the chloroplast; the sequence is MASIPATVATVAQANMVAPFTGLKSNAAFPVTKKVNDFSTLPSNGGRVQ.

The protein belongs to the RuBisCO small chain family. As to quaternary structure, heterohexadecamer of 8 large and 8 small subunits.

Its subcellular location is the plastid. The protein resides in the chloroplast. In terms of biological role, ruBisCO catalyzes two reactions: the carboxylation of D-ribulose 1,5-bisphosphate, the primary event in carbon dioxide fixation, as well as the oxidative fragmentation of the pentose substrate. Both reactions occur simultaneously and in competition at the same active site. Although the small subunit is not catalytic it is essential for maximal activity. The protein is Ribulose bisphosphate carboxylase small subunit, chloroplastic 5 of Flaveria pringlei.